The following is a 491-amino-acid chain: Dipeptide and tripeptide permease B (491 aa).

Residues 1–26 lie on the Cytoplasmic side of the membrane; it reads MNNTAPGLLHQPKPFFMIFFVELWER. The chain crosses the membrane as a helical span at residues 27-47; it reads FGYYGVQGILAVFFVKQLGFS. Over 48 to 51 the chain is Periplasmic; that stretch reads QEQA. Residues 52-72 form a helical membrane-spanning segment; sequence FITFGAFAALVYGLISIGGYV. Over 73 to 81 the chain is Cytoplasmic; the sequence is GDHLLGTKR. The helical transmembrane segment at 82–102 threads the bilayer; the sequence is TMVLGAIVLALGYFMTGMSLL. Residues 103 to 105 are Periplasmic-facing; that stretch reads KPE. The chain crosses the membrane as a helical span at residues 106–126; the sequence is MIFIALGTIAVGNGLFKANPA. Over 127 to 145 the chain is Cytoplasmic; the sequence is SLLSKCYPPKDPRLDGAFT. A helical transmembrane segment spans residues 146 to 166; sequence LFYMSINIGSLLSLSLAPIIA. Over 167–171 the chain is Periplasmic; sequence ERFGY. Residues 172-192 traverse the membrane as a helical segment; that stretch reads AVTYNLCGLGLIIALLVYFAC. The Cytoplasmic portion of the chain corresponds to 193 to 210; the sequence is RGMVRSIGSAPDHQPLNY. The chain crosses the membrane as a helical span at residues 211-231; sequence GKLLLVLAGAVVMIFLCAWLM. A topological domain (periplasmic) is located at residue His-232. The helical transmembrane segment at 233–253 threads the bilayer; that stretch reads NVGVANIVLIAVSAVVLYFFF. Residues 254–266 are Cytoplasmic-facing; sequence REAFKQDKTGRNR. The helical transmembrane segment at 267–287 threads the bilayer; that stretch reads MFVAFILMIEAVLFYILYAQM. At 288-312 the chain is on the periplasmic side; the sequence is PTSLNFFAINNVRHELLGFAINPVS. A helical membrane pass occupies residues 313–335; that stretch reads FQALNPFWVVVASPILASIYTRL. Topologically, residues 336–349 are cytoplasmic; it reads GSRGRDMTMPTKFT. Residues 350–370 traverse the membrane as a helical segment; sequence LGMLLCSLGFLTAAAAGMWFA. At 371–378 the chain is on the periplasmic side; that stretch reads DAQGLTSP. Residues 379–399 form a helical membrane-spanning segment; the sequence is WFVVLVYLFQSLGELMISALG. The Cytoplasmic segment spans residues 400–423; the sequence is LAMVAALVPQYLMGFILGMWFLTQ. The helical transmembrane segment at 424–444 threads the bilayer; it reads AAAFLLGGYVATFTAVPAGIH. At 445–454 the chain is on the periplasmic side; sequence DPLQTLPIYT. A helical transmembrane segment spans residues 455–475; sequence GVFGKIGIATLIVTLVMAAMV. Topologically, residues 476 to 491 are cytoplasmic; that stretch reads PWLNRMMNTPADGQKA.

Belongs to the major facilitator superfamily. Proton-dependent oligopeptide transporter (POT/PTR) (TC 2.A.17) family. DtpB subfamily.

Its subcellular location is the cell inner membrane. Proton-dependent permease that transports di- and tripeptides. The protein is Dipeptide and tripeptide permease B of Edwardsiella piscicida.